The chain runs to 476 residues: Bifunctional protein HldE (476 aa).

The segment at 1–318 (MAQYSAEFKQ…ENAIHARPET (318 aa)) is ribokinase. Residue 195–198 (NMSE) participates in ATP binding. D264 is a catalytic residue. Positions 344–476 (MTNGCFDILH…VIEKIKLLKD (133 aa)) are cytidylyltransferase.

In the N-terminal section; belongs to the carbohydrate kinase PfkB family. The protein in the C-terminal section; belongs to the cytidylyltransferase family. As to quaternary structure, homodimer.

The enzyme catalyses D-glycero-beta-D-manno-heptose 7-phosphate + ATP = D-glycero-beta-D-manno-heptose 1,7-bisphosphate + ADP + H(+). It catalyses the reaction D-glycero-beta-D-manno-heptose 1-phosphate + ATP + H(+) = ADP-D-glycero-beta-D-manno-heptose + diphosphate. It functions in the pathway nucleotide-sugar biosynthesis; ADP-L-glycero-beta-D-manno-heptose biosynthesis; ADP-L-glycero-beta-D-manno-heptose from D-glycero-beta-D-manno-heptose 7-phosphate: step 1/4. Its pathway is nucleotide-sugar biosynthesis; ADP-L-glycero-beta-D-manno-heptose biosynthesis; ADP-L-glycero-beta-D-manno-heptose from D-glycero-beta-D-manno-heptose 7-phosphate: step 3/4. The protein operates within bacterial outer membrane biogenesis; LOS core biosynthesis. Functionally, catalyzes the phosphorylation of D-glycero-D-manno-heptose 7-phosphate at the C-1 position to selectively form D-glycero-beta-D-manno-heptose-1,7-bisphosphate. In terms of biological role, catalyzes the ADP transfer from ATP to D-glycero-beta-D-manno-heptose 1-phosphate, yielding ADP-D-glycero-beta-D-manno-heptose. This chain is Bifunctional protein HldE, found in Haemophilus influenzae (strain ATCC 51907 / DSM 11121 / KW20 / Rd).